Consider the following 169-residue polypeptide: Ribosome maturation factor RimP (169 aa).

It belongs to the RimP family.

Its subcellular location is the cytoplasm. Functionally, required for maturation of 30S ribosomal subunits. This is Ribosome maturation factor RimP from Pseudomonas putida (strain ATCC 700007 / DSM 6899 / JCM 31910 / BCRC 17059 / LMG 24140 / F1).